The chain runs to 357 residues: Actin, cytoplasmic (357 aa).

The protein belongs to the actin family. Post-translationally, met-1 may be removed after translation.

The protein localises to the cytoplasm. It is found in the cytoskeleton. It catalyses the reaction ATP + H2O = ADP + phosphate + H(+). Functionally, actins are highly conserved proteins that are involved in various types of cell motility and are ubiquitously expressed in all eukaryotic cells. This is Actin, cytoplasmic from Oxytricha fallax.